Consider the following 223-residue polypeptide: Endonuclease NucS (223 aa).

It belongs to the NucS endonuclease family.

Its subcellular location is the cytoplasm. Functionally, cleaves both 3' and 5' ssDNA extremities of branched DNA structures. The protein is Endonuclease NucS of Mycolicibacterium gilvum (strain PYR-GCK) (Mycobacterium gilvum (strain PYR-GCK)).